The following is a 335-amino-acid chain: MKRPRVFVTREVFPEALELLSKYYDVEVWDKYQPPPYETLLSKAREADALYTLLTDRIDCDLLSQAPRLRIVAQMAVGFDNIDVECATRLGIYVTNTPGVLTEATAEFTWALILAAARRVVEADHFVRWGEWWRLRTGWHPMMMLGVELRGKTLGILGMGRIGSRVAEIGKAFGMRIIYHSRSRKREIEKELGAEYRSLEDLLRESDILSIHLPLTDETRHLIGESELKLMKKTAILVNTGRGAIVDTGALVKALREGWIAAAALDVFEEEPLNPNHPLTAFKNVVLAPHAASATRETRLRMAMMAAENLVAFAQGKVPPNLVNREVVKVRQPGF.

Residues 159–162, 181–183, and 240–242 each bind NADP(+); these read MGRI, SRS, and TGR. Catalysis depends on residues Arg242 and Glu271. The active-site Proton donor is His290. NADP(+) is bound at residue 290 to 292; sequence HAA.

Belongs to the D-isomer specific 2-hydroxyacid dehydrogenase family. GyaR subfamily. In terms of assembly, homodimer.

Its subcellular location is the cytoplasm. It carries out the reaction glycolate + NAD(+) = glyoxylate + NADH + H(+). The chain is Glyoxylate reductase from Aeropyrum pernix (strain ATCC 700893 / DSM 11879 / JCM 9820 / NBRC 100138 / K1).